The following is a 108-amino-acid chain: Small ribosomal subunit protein uS17 (108 aa).

A disordered region spans residues 1–26; that stretch reads MREKMAEATETQASETSTRGRPKTRV. Residues 8 to 17 show a composition bias toward low complexity; sequence ATETQASETS.

This sequence belongs to the universal ribosomal protein uS17 family. As to quaternary structure, part of the 30S ribosomal subunit.

Functionally, one of the primary rRNA binding proteins, it binds specifically to the 5'-end of 16S ribosomal RNA. The chain is Small ribosomal subunit protein uS17 from Myxococcus xanthus (strain DK1622).